Here is a 609-residue protein sequence, read N- to C-terminus: NADH-ubiquinone oxidoreductase chain 5 (609 aa).

The next 16 membrane-spanning stretches (helical) occupy residues 3 to 23, 46 to 66, 90 to 110, 115 to 135, 140 to 160, 174 to 194, 216 to 236, 244 to 264, 276 to 296, 304 to 323, 328 to 350, 368 to 388, 410 to 432, 460 to 480, 485 to 505, and 585 to 605; these read VINL…LPIV, AFMI…EMII, MIFV…SMWY, PFIN…MILV, LFQL…LIGW, AVLY…WFLI, LMGL…HPWL, TPVS…FLLI, MQTT…ICAL, IIAF…IGIN, AFLH…GSII, VLPF…GMPF, WALL…IMFF, LLLG…PTST, MPYY…ILAL, and GLIK…LMMI.

It belongs to the complex I subunit 5 family.

Its subcellular location is the mitochondrion inner membrane. It carries out the reaction a ubiquinone + NADH + 5 H(+)(in) = a ubiquinol + NAD(+) + 4 H(+)(out). In terms of biological role, core subunit of the mitochondrial membrane respiratory chain NADH dehydrogenase (Complex I) that is believed to belong to the minimal assembly required for catalysis. Complex I functions in the transfer of electrons from NADH to the respiratory chain. The immediate electron acceptor for the enzyme is believed to be ubiquinone. This is NADH-ubiquinone oxidoreductase chain 5 (MT-ND5) from Phoca vitulina (Harbor seal).